Here is a 336-residue protein sequence, read N- to C-terminus: MRYLPWLLLWAFLQVWGQSEAQQKNYTFRCLQMSSFANRSWSRTDSVVWLGDLQTHRWSNDSATISFTKPWSQGKLSNQQWEKLQHMFQVYRVSFTRDIQELVKMMSPKEDYPIEIQLSAGCEMYPGNASESFLHVAFQGKYVVRFWGTSWQTVPGAPSWLDLPIKVLNADQGTSATVQMLLNDTCPLFVRGLLEAGKSDLEKQEKPVAWLSSVPSSADGHRQLVCHVSGFYPKPVWVMWMRGDQEQQGTHRGDFLPNADETWYLQATLDVEAGEEAGLACRVKHSSLGGQDIILYWDARQAPVGLIVFIVLIMLVVVGAVVYYIWRRRSAYQDIR.

Residues 1–21 (MRYLPWLLLWAFLQVWGQSEA) form the signal peptide. Residues 22 to 305 (QQKNYTFRCL…YWDARQAPVG (284 aa)) lie on the Extracellular side of the membrane. 3 N-linked (GlcNAc...) asparagine glycosylation sites follow: N25, N38, and N60. An a D-galactosylceramide-binding site is contributed by D98. Cystine bridges form between C122-C186 and C226-C281. An N-linked (GlcNAc...) asparagine glycan is attached at N128. A D-galactosylceramide is bound at residue 171-174 (DQGT). N183 carries N-linked (GlcNAc...) asparagine glycosylation. The Ig-like domain maps to 207-297 (PVAWLSSVPS…LGGQDIILYW (91 aa)). A helical transmembrane segment spans residues 306 to 326 (LIVFIVLIMLVVVGAVVYYIW). Over 327–336 (RRRSAYQDIR) the chain is Cytoplasmic. The Internalization signal motif lies at 332–335 (YQDI).

In terms of assembly, heterodimer with B2M (beta-2-microglobulin). Interacts with MHC II and CD74. N-glycosylated. Expressed on cortical thymocytes, on certain T-cell leukemias, and in various other tissues.

It localises to the cell membrane. It is found in the endosome membrane. The protein resides in the lysosome membrane. Its function is as follows. Antigen-presenting protein that binds self and non-self glycolipids and presents them to T-cell receptors on natural killer T-cells. This chain is Antigen-presenting glycoprotein CD1d1 (Cd1d1), found in Mus musculus (Mouse).